Reading from the N-terminus, the 84-residue chain is UPF0473 protein CPF_2030 (84 aa).

It belongs to the UPF0473 family.

The polypeptide is UPF0473 protein CPF_2030 (Clostridium perfringens (strain ATCC 13124 / DSM 756 / JCM 1290 / NCIMB 6125 / NCTC 8237 / Type A)).